Reading from the N-terminus, the 702-residue chain is Arginine decarboxylase 1, chloroplastic (702 aa).

The N-terminal 52 residues, 1 to 52, are a transit peptide targeting the chloroplast; it reads MPALAFVDTPIDTFSSIFTPSSVSTAVVDGSCHWSPSLSSSLYRIDGWGAPY. Lysine 136 bears the N6-(pyridoxal phosphate)lysine mark. Pyridoxal 5'-phosphate-binding positions include serine 288, glycine 325, and 374-377; that span reads ESGR. Substrate is bound at residue 320–330; it reads IDIGGGLGIDY. 436-437 is a substrate binding site; it reads YV. The active-site Proton donor; shared with dimeric partner is cysteine 524. Aspartate 525 serves as a coordination point for substrate. Tyrosine 565 provides a ligand contact to pyridoxal 5'-phosphate.

Belongs to the Orn/Lys/Arg decarboxylase class-II family. SpeA subfamily. In terms of assembly, homodimer. Only the dimer is catalytically active, as the active sites are constructed of residues from both monomers. May form a head-to-tail homodimer. Homodimer and heterodimer with ADC2. The cofactor is pyridoxal 5'-phosphate. Mg(2+) serves as cofactor.

Its subcellular location is the plastid. The protein localises to the chloroplast. It is found in the cytoplasm. It localises to the cytosol. It catalyses the reaction L-arginine + H(+) = agmatine + CO2. Its pathway is amine and polyamine biosynthesis; agmatine biosynthesis; agmatine from L-arginine: step 1/1. Functionally, required for the biosynthesis of putrescine. Catalyzes the first step of polyamine (PA) biosynthesis to produce putrescine from arginine. Is a minor contributor to basal arginine decarboxylase (ADC) activity and putrescine biosynthesis. Accumulation of putrescine plays a positive role in freezing tolerance. Production of polyamines is essential for normal seed development. Controls PA homeostasis which is crucial for normal plant growth and development. The chain is Arginine decarboxylase 1, chloroplastic from Arabidopsis thaliana (Mouse-ear cress).